The primary structure comprises 159 residues: MSYSITTPSQFVFLSSAWADPIELINLCTNALGNQFQTQQARTVVQRQFSEVWKPSPQVTVRFPDSDFKVYRYNAVLDPLVTALLGAFDTRNRIIEVENQANPTTAETLDATRRVDDATVAIRSAINNLVVELIRGTGSYNRSSFESSSGLVWTSGPAT.

An N-acetylserine; by host modification is found at Ser-2.

The protein belongs to the virgaviridae capsid protein family.

It is found in the virion. Functionally, capsid protein self-assembles to form rod-shaped virions about 18 nm in diameter with a central canal enclosing the viral genomic RNA. This Nicotiana tabacum (Common tobacco) protein is Capsid protein (CP).